The chain runs to 459 residues: Putrescine aminotransferase (459 aa).

Residues 150 to 151 and Gln-274 each bind pyridoxal 5'-phosphate; that span reads GT. Lys-300 is subject to N6-(pyridoxal phosphate)lysine. Residue Thr-332 coordinates pyridoxal 5'-phosphate.

This sequence belongs to the class-III pyridoxal-phosphate-dependent aminotransferase family. Putrescine aminotransferase subfamily. Pyridoxal 5'-phosphate serves as cofactor.

The enzyme catalyses an alkane-alpha,omega-diamine + 2-oxoglutarate = an omega-aminoaldehyde + L-glutamate. It carries out the reaction putrescine + 2-oxoglutarate = 1-pyrroline + L-glutamate + H2O. The catalysed reaction is cadaverine + 2-oxoglutarate = 5-aminopentanal + L-glutamate. It functions in the pathway amine and polyamine degradation; putrescine degradation; 4-aminobutanal from putrescine (transaminase route): step 1/1. Catalyzes the aminotransferase reaction from putrescine to 2-oxoglutarate, leading to glutamate and 4-aminobutanal, which spontaneously cyclizes to form 1-pyrroline. This is the first step in one of two pathways for putrescine degradation, where putrescine is converted into 4-aminobutanoate (gamma-aminobutyrate or GABA) via 4-aminobutanal. Also functions as a cadaverine transaminase in a a L-lysine degradation pathway to succinate that proceeds via cadaverine, glutarate and L-2-hydroxyglutarate. The sequence is that of Putrescine aminotransferase from Escherichia coli O17:K52:H18 (strain UMN026 / ExPEC).